Here is a 276-residue protein sequence, read N- to C-terminus: MGIKVYKPTTNGRRNMTGSDFAEITTSTPEKSLLVSMSKTAGRNNTGRITVRHHGGGHKRKYRVIDFKRTTDNVVAKVATIEYDPNRTANIALIVYSNGVKSYILAPKGLEVGMTVVSGPEADIKVGNALPLANIPVGTLIHNIELKPGKGGQLVRSAGASAQVLGSEGKYTLVRLQSGEVRMILSTCRATIGVVGNEQQSLINLGKAGRTRHMGIRPTVRGSVMNPNDHPHGGGEGRQPVGRKSPMTPWGKPALGLKTRNKKAKSSKLIVRRIND.

The interval 219–268 is disordered; it reads TVRGSVMNPNDHPHGGGEGRQPVGRKSPMTPWGKPALGLKTRNKKAKSSK.

This sequence belongs to the universal ribosomal protein uL2 family. Part of the 50S ribosomal subunit. Forms a bridge to the 30S subunit in the 70S ribosome.

In terms of biological role, one of the primary rRNA binding proteins. Required for association of the 30S and 50S subunits to form the 70S ribosome, for tRNA binding and peptide bond formation. It has been suggested to have peptidyltransferase activity; this is somewhat controversial. Makes several contacts with the 16S rRNA in the 70S ribosome. This chain is Large ribosomal subunit protein uL2, found in Lactococcus lactis subsp. lactis (strain IL1403) (Streptococcus lactis).